The chain runs to 507 residues: Histidine ammonia-lyase (507 aa).

The 5-imidazolinone (Ala-Gly) cross-link spans 141–143 (ASG). Ser-142 carries the 2,3-didehydroalanine (Ser) modification.

Belongs to the PAL/histidase family. Post-translationally, contains an active site 4-methylidene-imidazol-5-one (MIO), which is formed autocatalytically by cyclization and dehydration of residues Ala-Ser-Gly.

It is found in the cytoplasm. The catalysed reaction is L-histidine = trans-urocanate + NH4(+). The protein operates within amino-acid degradation; L-histidine degradation into L-glutamate; N-formimidoyl-L-glutamate from L-histidine: step 1/3. This Burkholderia ambifaria (strain ATCC BAA-244 / DSM 16087 / CCUG 44356 / LMG 19182 / AMMD) (Burkholderia cepacia (strain AMMD)) protein is Histidine ammonia-lyase.